A 350-amino-acid polypeptide reads, in one-letter code: Nicotinate-nucleotide--dimethylbenzimidazole phosphoribosyltransferase (350 aa).

Catalysis depends on Glu317, which acts as the Proton acceptor.

It belongs to the CobT family.

The enzyme catalyses 5,6-dimethylbenzimidazole + nicotinate beta-D-ribonucleotide = alpha-ribazole 5'-phosphate + nicotinate + H(+). It functions in the pathway nucleoside biosynthesis; alpha-ribazole biosynthesis; alpha-ribazole from 5,6-dimethylbenzimidazole: step 1/2. In terms of biological role, catalyzes the synthesis of alpha-ribazole-5'-phosphate from nicotinate mononucleotide (NAMN) and 5,6-dimethylbenzimidazole (DMB). In Shewanella putrefaciens (strain CN-32 / ATCC BAA-453), this protein is Nicotinate-nucleotide--dimethylbenzimidazole phosphoribosyltransferase.